We begin with the raw amino-acid sequence, 214 residues long: Adenylate kinase (214 aa).

Position 10–15 (Gly-10–Thr-15) interacts with ATP. An NMP region spans residues Ser-30–Val-59. AMP is bound by residues Thr-31, Arg-36, Gln-57 to Val-59, Gly-85 to Arg-88, and Gln-92. The tract at residues Gly-122 to Asp-159 is LID. ATP contacts are provided by residues Arg-123 and Thr-132 to Tyr-133. Residues Arg-156 and Arg-167 each contribute to the AMP site. Lys-200 provides a ligand contact to ATP.

Belongs to the adenylate kinase family. As to quaternary structure, monomer.

The protein localises to the cytoplasm. The catalysed reaction is AMP + ATP = 2 ADP. Its pathway is purine metabolism; AMP biosynthesis via salvage pathway; AMP from ADP: step 1/1. Catalyzes the reversible transfer of the terminal phosphate group between ATP and AMP. Plays an important role in cellular energy homeostasis and in adenine nucleotide metabolism. This chain is Adenylate kinase, found in Vibrio vulnificus (strain YJ016).